The sequence spans 190 residues: Peptidyl-tRNA hydrolase (190 aa).

Tyrosine 14 contributes to the tRNA binding site. Histidine 19 (proton acceptor) is an active-site residue. Positions 64, 66, and 112 each coordinate tRNA.

This sequence belongs to the PTH family. As to quaternary structure, monomer.

The protein localises to the cytoplasm. It carries out the reaction an N-acyl-L-alpha-aminoacyl-tRNA + H2O = an N-acyl-L-amino acid + a tRNA + H(+). Hydrolyzes ribosome-free peptidyl-tRNAs (with 1 or more amino acids incorporated), which drop off the ribosome during protein synthesis, or as a result of ribosome stalling. Its function is as follows. Catalyzes the release of premature peptidyl moieties from peptidyl-tRNA molecules trapped in stalled 50S ribosomal subunits, and thus maintains levels of free tRNAs and 50S ribosomes. This is Peptidyl-tRNA hydrolase from Chlorobium luteolum (strain DSM 273 / BCRC 81028 / 2530) (Pelodictyon luteolum).